A 158-amino-acid polypeptide reads, in one-letter code: Snaclec mucrocetin subunit alpha (158 aa).

Residues 1 to 23 form the signal peptide; the sequence is MGRFIFVSFGLLVVFLSLSGTGA. Cystine bridges form between Cys-27/Cys-38, Cys-55/Cys-152, and Cys-127/Cys-144. Residues 34 to 153 form the C-type lectin domain; the sequence is YDRYCYQAFS…CGRENPFVCK (120 aa).

It belongs to the snaclec family. As to quaternary structure, tetramer of heterodimers of alpha and beta subunits (alphabeta)(4); disulfide-linked. Expressed by the venom gland.

It localises to the secreted. In terms of biological role, platelet-agglutinating factor that acts in a vWF-independent manner. Binds specifically to platelet GPIbalpha (GP1BA) to a distinct binding site from that of flavocetin-A. In Protobothrops mucrosquamatus (Taiwan habu), this protein is Snaclec mucrocetin subunit alpha.